Consider the following 503-residue polypeptide: Apolipoprotein N-acyltransferase (503 aa).

Transmembrane regions (helical) follow at residues 13 to 32 (RWRG…LTAL), 34 to 54 (MPGF…LYAV), 63 to 83 (AFLS…WVLP), 102 to 122 (IVVF…FGFL), 124 to 144 (YFAP…YTIF), 173 to 193 (IVSI…NVLF), and 203 to 223 (LLIF…VHLL). A CN hydrolase domain is found at 231 to 460 (FKVVALQPNV…RLAGEFHIKA (230 aa)). Glutamate 273 functions as the Proton acceptor in the catalytic mechanism. Lysine 321 is an active-site residue. Catalysis depends on cysteine 371, which acts as the Nucleophile. A helical transmembrane segment spans residues 468–488 (VRYGDWFFYLSVILAVVSVFI).

It belongs to the CN hydrolase family. Apolipoprotein N-acyltransferase subfamily.

The protein localises to the cell inner membrane. It catalyses the reaction N-terminal S-1,2-diacyl-sn-glyceryl-L-cysteinyl-[lipoprotein] + a glycerophospholipid = N-acyl-S-1,2-diacyl-sn-glyceryl-L-cysteinyl-[lipoprotein] + a 2-acyl-sn-glycero-3-phospholipid + H(+). Its pathway is protein modification; lipoprotein biosynthesis (N-acyl transfer). Catalyzes the phospholipid dependent N-acylation of the N-terminal cysteine of apolipoprotein, the last step in lipoprotein maturation. The sequence is that of Apolipoprotein N-acyltransferase from Thermotoga maritima (strain ATCC 43589 / DSM 3109 / JCM 10099 / NBRC 100826 / MSB8).